The following is a 203-amino-acid chain: Proteasome subunit beta 2 (203 aa).

Residues 1-9 (MGEEFQVGA) constitute a propeptide, removed in mature form; by autocatalysis. Residue T10 is the Nucleophile of the active site.

This sequence belongs to the peptidase T1B family. In terms of assembly, the 20S proteasome core is composed of 14 alpha and 14 beta subunits that assemble into four stacked heptameric rings, resulting in a barrel-shaped structure. The two inner rings, each composed of seven catalytic beta subunits, are sandwiched by two outer rings, each composed of seven alpha subunits. The catalytic chamber with the active sites is on the inside of the barrel. Has a gated structure, the ends of the cylinder being occluded by the N-termini of the alpha-subunits. Is capped at one or both ends by the proteasome regulatory ATPase, PAN.

It is found in the cytoplasm. It catalyses the reaction Cleavage of peptide bonds with very broad specificity.. The formation of the proteasomal ATPase PAN-20S proteasome complex, via the docking of the C-termini of PAN into the intersubunit pockets in the alpha-rings, triggers opening of the gate for substrate entry. Interconversion between the open-gate and close-gate conformations leads to a dynamic regulation of the 20S proteasome proteolysis activity. Component of the proteasome core, a large protease complex with broad specificity involved in protein degradation. The sequence is that of Proteasome subunit beta 2 from Pyrobaculum neutrophilum (strain DSM 2338 / JCM 9278 / NBRC 100436 / V24Sta) (Thermoproteus neutrophilus).